Here is a 352-residue protein sequence, read N- to C-terminus: Homeobox protein Mohawk (352 aa).

Residues 19–53 (GASERERGGRPYSGVLDSPHARPEVGIADGPPLKD) form a disordered region. Positions 71–132 (VRHKRQALQD…NARRRLKNTV (62 aa)) form a DNA-binding region, homeobox; TALE-type. 2 disordered regions span residues 157–194 (LSVSSDDSCSEGGENPPRTHMNEGGYNTPVHHPVIKSE) and 245–272 (TRQRNHSGSFSSNEFEEELVSPSSSETE).

The protein belongs to the TALE/IRO homeobox family.

It localises to the nucleus. May act as a morphogenetic regulator of cell adhesion. The sequence is that of Homeobox protein Mohawk (MKX) from Pongo abelii (Sumatran orangutan).